The primary structure comprises 114 residues: Protein D2 (114 aa).

It belongs to the phosphatidylethanolamine-binding protein family.

In Onchocerca volvulus, this protein is Protein D2 (D2).